A 434-amino-acid chain; its full sequence is Trigger factor (434 aa).

Positions 162-247 (GDKINISLIA…FNTVEQAKLP (86 aa)) constitute a PPIase FKBP-type domain.

Belongs to the FKBP-type PPIase family. Tig subfamily.

It localises to the cytoplasm. It carries out the reaction [protein]-peptidylproline (omega=180) = [protein]-peptidylproline (omega=0). In terms of biological role, involved in protein export. Acts as a chaperone by maintaining the newly synthesized protein in an open conformation. Functions as a peptidyl-prolyl cis-trans isomerase. The chain is Trigger factor from Methylobacillus flagellatus (strain ATCC 51484 / DSM 6875 / VKM B-1610 / KT).